Here is a 257-residue protein sequence, read N- to C-terminus: Glutamate racemase (257 aa).

Residues 12–13 and 44–45 each bind substrate; these read DS and YG. Cys-75 (proton donor/acceptor) is an active-site residue. Residue 76–77 coordinates substrate; it reads NT. Cys-176 acts as the Proton donor/acceptor in catalysis. Substrate is bound at residue 177–178; the sequence is TH.

It belongs to the aspartate/glutamate racemases family.

The enzyme catalyses L-glutamate = D-glutamate. It functions in the pathway cell wall biogenesis; peptidoglycan biosynthesis. Its function is as follows. Provides the (R)-glutamate required for cell wall biosynthesis. The protein is Glutamate racemase of Thermus thermophilus (strain ATCC BAA-163 / DSM 7039 / HB27).